Consider the following 275-residue polypeptide: Tryptophan synthase alpha chain (275 aa).

Catalysis depends on proton acceptor residues Glu-49 and Asp-60.

The protein belongs to the TrpA family. In terms of assembly, tetramer of two alpha and two beta chains.

The enzyme catalyses (1S,2R)-1-C-(indol-3-yl)glycerol 3-phosphate + L-serine = D-glyceraldehyde 3-phosphate + L-tryptophan + H2O. It participates in amino-acid biosynthesis; L-tryptophan biosynthesis; L-tryptophan from chorismate: step 5/5. In terms of biological role, the alpha subunit is responsible for the aldol cleavage of indoleglycerol phosphate to indole and glyceraldehyde 3-phosphate. The polypeptide is Tryptophan synthase alpha chain (Psychrobacter sp. (strain PRwf-1)).